The sequence spans 699 residues: Lutropin-choriogonadotropic hormone receptor (699 aa).

A signal peptide spans 1-26 (MKQRFSALQLLKLLLLLQPPLPRALR). The 40-residue stretch at 27-66 (EALCPEPCNCVPDGALRCPGPTAGLTRLSLAYLPVKVIPS) folds into the LRRNT domain. The Extracellular segment spans residues 27 to 363 (EALCPEPCNC…EDIMGYDFLR (337 aa)). LRR repeat units lie at residues 96-115 (NLLN…RYIE), 124-145 (RLKY…TKVF), and 149-171 (SNFI…AFQG). Asn99 carries an N-linked (GlcNAc...) asparagine glycan. Asn174 and Asn195 each carry an N-linked (GlcNAc...) asparagine glycan. LRR repeat units follow at residues 175 to 196 (ESVT…AFNG), 198 to 220 (TLTS…AFRG), and 223 to 244 (GPKT…GLES). 3 N-linked (GlcNAc...) asparagine glycosylation sites follow: Asn291, Asn299, and Asn313. Tyr331 carries the sulfotyrosine modification. A helical membrane pass occupies residues 364–385 (VLIWLINILAIMGNMTVLFVLL). Topologically, residues 386-395 (TSRYKLTVPR) are cytoplasmic. Residues 396–416 (FLMCNLSFADFCMGLYLLLIA) form a helical membrane-spanning segment. Topologically, residues 417-439 (SVDSQTKGQYYNHAIDWQTGSGC) are extracellular. Cys439 and Cys514 are disulfide-bonded. Residues 440–462 (STAGFFTVFASELSVYTLTVITL) traverse the membrane as a helical segment. Over 463–482 (ERWHTITYAIHLDQKLRLRH) the chain is Cytoplasmic. Residues 483–505 (AILIMLGGWLFSSLIAMLPLVGV) form a helical membrane-spanning segment. Topologically, residues 506–525 (SNYMKVSICFPMDVETTLSQ) are extracellular. The chain crosses the membrane as a helical span at residues 526–549 (VYILTILILNVVAFFIICACYIKI). The Cytoplasmic segment spans residues 550 to 570 (YFAVRNPELMATNKDTKIAKK). Residues 571–594 (MAILIFTDFTCMAPISFFAISAAF) traverse the membrane as a helical segment. Over 595 to 605 (KVPLITVTNSK) the chain is Extracellular. Residues 606–627 (VLLVLFYPINSCANPFLYAIFT) traverse the membrane as a helical segment. At 628–699 (KTFQRDFFLL…LLDKTRYTEC (72 aa)) the chain is on the cytoplasmic side. Residues Cys643 and Cys644 are each lipidated (S-palmitoyl cysteine).

The protein belongs to the G-protein coupled receptor 1 family. FSH/LSH/TSH subfamily. Post-translationally, sulfated. In terms of tissue distribution, gonadal and thyroid cells.

It is found in the cell membrane. Its function is as follows. Receptor for lutropin-choriogonadotropic hormone. The activity of this receptor is mediated by G proteins which activate adenylate cyclase. This chain is Lutropin-choriogonadotropic hormone receptor (LHCGR), found in Homo sapiens (Human).